The primary structure comprises 346 residues: S-adenosylmethionine:tRNA ribosyltransferase-isomerase (346 aa).

This sequence belongs to the QueA family. In terms of assembly, monomer.

It is found in the cytoplasm. The catalysed reaction is 7-aminomethyl-7-carbaguanosine(34) in tRNA + S-adenosyl-L-methionine = epoxyqueuosine(34) in tRNA + adenine + L-methionine + 2 H(+). The protein operates within tRNA modification; tRNA-queuosine biosynthesis. Functionally, transfers and isomerizes the ribose moiety from AdoMet to the 7-aminomethyl group of 7-deazaguanine (preQ1-tRNA) to give epoxyqueuosine (oQ-tRNA). This chain is S-adenosylmethionine:tRNA ribosyltransferase-isomerase, found in Shewanella frigidimarina (strain NCIMB 400).